The chain runs to 226 residues: UPF0319 protein YpAngola_A3206 (226 aa).

An N-terminal signal peptide occupies residues 1–20 (MKLGLVAGMLAVCFSFSSVA).

It belongs to the UPF0319 family.

The sequence is that of UPF0319 protein YpAngola_A3206 from Yersinia pestis bv. Antiqua (strain Angola).